The sequence spans 363 residues: Protein disulfide-isomerase 1 (363 aa).

The signal sequence occupies residues 1–20; sequence MKILLFVTLIALAFVALCSA. Thioredoxin domains follow at residues 21-132 and 133-285; these read EGNV…NHAK and TNVK…AAAE. Residues C51, C54, C172, and C175 each act as nucleophile in the active site. 2 disulfides stabilise this stretch: C51–C54 and C172–C175.

This sequence belongs to the protein disulfide isomerase family.

It is found in the endoplasmic reticulum lumen. It carries out the reaction Catalyzes the rearrangement of -S-S- bonds in proteins.. Its function is as follows. Participates in the folding of proteins containing disulfide bonds, may be involved in glycosylation, prolyl hydroxylation and triglyceride transfer. The chain is Protein disulfide-isomerase 1 (pdi1) from Dictyostelium discoideum (Social amoeba).